Here is a 154-residue protein sequence, read N- to C-terminus: uncharacterized protein (154 aa).

The HTH marR-type domain maps to 14–146; the sequence is AMNLYRVFAR…LIVLLKKAGI (133 aa). Positions 60–83 form a DNA-binding region, H-T-H motif; sequence LQQIGSRLLLVSGNVTYVIDKLER.

This is an uncharacterized protein from Bacillus subtilis (strain 168).